The chain runs to 130 residues: Small ribosomal subunit protein uS8 (130 aa).

The protein belongs to the universal ribosomal protein uS8 family. Part of the 30S ribosomal subunit. Contacts proteins S5 and S12.

One of the primary rRNA binding proteins, it binds directly to 16S rRNA central domain where it helps coordinate assembly of the platform of the 30S subunit. The polypeptide is Small ribosomal subunit protein uS8 (Shewanella denitrificans (strain OS217 / ATCC BAA-1090 / DSM 15013)).